Reading from the N-terminus, the 357-residue chain is UDP-N-acetylglucosamine--N-acetylmuramyl-(pentapeptide) pyrophosphoryl-undecaprenol N-acetylglucosamine transferase (357 aa).

Residues 13–15 (SAG), Arg166, Ser196, and Gln291 contribute to the UDP-N-acetyl-alpha-D-glucosamine site.

Belongs to the glycosyltransferase 28 family. MurG subfamily.

The protein localises to the cell membrane. It catalyses the reaction di-trans,octa-cis-undecaprenyl diphospho-N-acetyl-alpha-D-muramoyl-L-alanyl-D-glutamyl-meso-2,6-diaminopimeloyl-D-alanyl-D-alanine + UDP-N-acetyl-alpha-D-glucosamine = di-trans,octa-cis-undecaprenyl diphospho-[N-acetyl-alpha-D-glucosaminyl-(1-&gt;4)]-N-acetyl-alpha-D-muramoyl-L-alanyl-D-glutamyl-meso-2,6-diaminopimeloyl-D-alanyl-D-alanine + UDP + H(+). It participates in cell wall biogenesis; peptidoglycan biosynthesis. Its function is as follows. Cell wall formation. Catalyzes the transfer of a GlcNAc subunit on undecaprenyl-pyrophosphoryl-MurNAc-pentapeptide (lipid intermediate I) to form undecaprenyl-pyrophosphoryl-MurNAc-(pentapeptide)GlcNAc (lipid intermediate II). The chain is UDP-N-acetylglucosamine--N-acetylmuramyl-(pentapeptide) pyrophosphoryl-undecaprenol N-acetylglucosamine transferase from Clostridium perfringens (strain SM101 / Type A).